The sequence spans 423 residues: uncharacterized protein (423 aa).

It belongs to the asfivirus E423R family.

The protein resides in the virion. This is an uncharacterized protein from Ornithodoros (relapsing fever ticks).